A 253-amino-acid chain; its full sequence is MGQCGITSSKTVLVFLNLIFWGAAGILCYVGAYVFITYDDYDHFFEDVYTLIPAVVIIAVGALLFIIGLIGCCATIRESRCGLATFVIILLLVFVTEVVVVVLGYVYRAKVENEVDRSIQKVYKTYNGTNPDAASRAIDYVQRQLHCCGIHNYSDWENTDWFKETKNQSVPLSCCRETASSCNGSLANPSDLYAEGCEALVVKKLQEIMMHVIWAALAFAAIQLLGMLCACIVLCRRSRDPAYELLITGGAYA.

Topologically, residues 1–11 (MGQCGITSSKT) are cytoplasmic. A helical transmembrane segment spans residues 12 to 32 (VLVFLNLIFWGAAGILCYVGA). The Extracellular portion of the chain corresponds to 33–50 (YVFITYDDYDHFFEDVYT). The chain crosses the membrane as a helical span at residues 51 to 71 (LIPAVVIIAVGALLFIIGLIG). Residues 72 to 85 (CCATIRESRCGLAT) lie on the Cytoplasmic side of the membrane. Residues 86-106 (FVIILLLVFVTEVVVVVLGYV) form a helical membrane-spanning segment. Residues 107-212 (YRAKVENEVD…KKLQEIMMHV (106 aa)) lie on the Extracellular side of the membrane. Asn127, Asn152, Asn167, and Asn183 each carry an N-linked (GlcNAc...) asparagine glycan. The chain crosses the membrane as a helical span at residues 213-233 (IWAALAFAAIQLLGMLCACIV). The Cytoplasmic segment spans residues 234-253 (LCRRSRDPAYELLITGGAYA).

The protein belongs to the tetraspanin (TM4SF) family. In terms of assembly, interacts with claudin-11/CLDN11 and integrins.

It localises to the membrane. In terms of biological role, regulates the proliferation and migration of oligodendrocytes, a process essential for normal myelination and repair. This chain is Tetraspanin-3 (TSPAN3), found in Bos taurus (Bovine).